Consider the following 443-residue polypeptide: NADH-quinone oxidoreductase subunit D 1 (443 aa).

Belongs to the complex I 49 kDa subunit family. As to quaternary structure, NDH-1 is composed of 14 different subunits. Subunits NuoB, C, D, E, F, and G constitute the peripheral sector of the complex.

The protein resides in the cell membrane. The catalysed reaction is a quinone + NADH + 5 H(+)(in) = a quinol + NAD(+) + 4 H(+)(out). In terms of biological role, NDH-1 shuttles electrons from NADH, via FMN and iron-sulfur (Fe-S) centers, to quinones in the respiratory chain. The immediate electron acceptor for the enzyme in this species is believed to be a menaquinone. Couples the redox reaction to proton translocation (for every two electrons transferred, four hydrogen ions are translocated across the cytoplasmic membrane), and thus conserves the redox energy in a proton gradient. This chain is NADH-quinone oxidoreductase subunit D 1, found in Streptomyces avermitilis (strain ATCC 31267 / DSM 46492 / JCM 5070 / NBRC 14893 / NCIMB 12804 / NRRL 8165 / MA-4680).